Reading from the N-terminus, the 236-residue chain is (5-formylfuran-3-yl)methyl phosphate synthase (236 aa).

K27 (schiff-base intermediate with substrate) is an active-site residue. The active-site Proton acceptor is K85.

Belongs to the MfnB family.

It catalyses the reaction 2 D-glyceraldehyde 3-phosphate = 4-(hydroxymethyl)-2-furancarboxaldehyde phosphate + phosphate + 2 H2O. It participates in cofactor biosynthesis; methanofuran biosynthesis. Functionally, catalyzes the formation of 4-(hydroxymethyl)-2-furancarboxaldehyde phosphate (4-HFC-P) from two molecules of glyceraldehyde-3-P (GA-3-P). This is (5-formylfuran-3-yl)methyl phosphate synthase from Methanococcus maripaludis (strain DSM 14266 / JCM 13030 / NBRC 101832 / S2 / LL).